The following is a 562-amino-acid chain: Arf-GAP domain and FG repeat-containing protein 1 (562 aa).

An Arf-GAP domain is found at 11–135; it reads EKHLKMLRDM…WYVPPEQAKV (125 aa). Residues 29–52 form a C4-type zinc finger; sequence CFDCDQRGPTYVNMTVGSFVCTSC. Ser167 carries the phosphoserine modification. The interval 168–194 is disordered; the sequence is APALHLNKGTPSQSPVVGRSQAQQQEK. Positions 176-191 are enriched in polar residues; that stretch reads GTPSQSPVVGRSQAQQ. Position 177 is a phosphothreonine (Thr177). Residues Ser181 and Ser362 each carry the phosphoserine modification. An O-linked (GlcNAc) serine glycan is attached at Ser367.

As to quaternary structure, interacts with EPS15R and EPS15. Interacts with FCHO1. In terms of processing, O-glycosylated.

Its subcellular location is the nucleus. The protein resides in the cytoplasmic vesicle. In terms of biological role, required for vesicle docking or fusion during acrosome biogenesis. May play a role in RNA trafficking or localization. This chain is Arf-GAP domain and FG repeat-containing protein 1 (AGFG1), found in Bos taurus (Bovine).